Reading from the N-terminus, the 154-residue chain is Ribonuclease H (154 aa).

Positions 1-142 constitute an RNase H type-1 domain; the sequence is MTPKLVIYTD…ADELARLGML (142 aa). The Mg(2+) site is built by Asp10, Glu48, Asp70, and Asp134.

The protein belongs to the RNase H family. As to quaternary structure, monomer. Mg(2+) is required as a cofactor.

The protein resides in the cytoplasm. It carries out the reaction Endonucleolytic cleavage to 5'-phosphomonoester.. Its function is as follows. Endonuclease that specifically degrades the RNA of RNA-DNA hybrids. The chain is Ribonuclease H from Caulobacter sp. (strain K31).